The following is a 362-amino-acid chain: Ribosomal RNA large subunit methyltransferase M (362 aa).

Residues Ser194, Cys227 to Gly230, Asp246, Asp266, and Asp284 each bind S-adenosyl-L-methionine. Lys313 (proton acceptor) is an active-site residue.

It belongs to the class I-like SAM-binding methyltransferase superfamily. RNA methyltransferase RlmE family. RlmM subfamily. As to quaternary structure, monomer.

It is found in the cytoplasm. The enzyme catalyses cytidine(2498) in 23S rRNA + S-adenosyl-L-methionine = 2'-O-methylcytidine(2498) in 23S rRNA + S-adenosyl-L-homocysteine + H(+). Catalyzes the 2'-O-methylation at nucleotide C2498 in 23S rRNA. This Aggregatibacter aphrophilus (strain NJ8700) (Haemophilus aphrophilus) protein is Ribosomal RNA large subunit methyltransferase M.